The sequence spans 405 residues: Accessory Sec system protein translocase subunit SecY2 (405 aa).

Transmembrane regions (helical) follow at residues 14–34, 63–83, 104–124, 131–151, 156–176, 191–211, 247–267, 285–305, 343–363, and 368–388; these read LFTL…LPFV, LSIF…WQMF, MYLT…RLPV, ILVV…LVWL, ASMG…LNIP, GIIV…ALMY, MYVM…GFIF, PLWV…FAFV, FSVI…LFVL, and LLRL…IFTI.

It belongs to the SecY/SEC61-alpha family. SecY2 subfamily. As to quaternary structure, component of the accessory SecA2/SecY2 protein translocase complex required to export cell wall proteins. May form heterotrimers with SecE and SecG subunits.

Its subcellular location is the cell membrane. In terms of biological role, part of the accessory SecA2/SecY2 system specifically required for export of possible cell wall proteins. The central subunit of a protein translocation channel. The protein is Accessory Sec system protein translocase subunit SecY2 of Streptococcus pneumoniae (strain CGSP14).